The chain runs to 64 residues: Small ribosomal subunit protein eS17 (64 aa).

Belongs to the eukaryotic ribosomal protein eS17 family.

The polypeptide is Small ribosomal subunit protein eS17 (Halorubrum lacusprofundi (strain ATCC 49239 / DSM 5036 / JCM 8891 / ACAM 34)).